Consider the following 203-residue polypeptide: CASP-like protein 2U2 (203 aa).

Residues Met1–Ala21 form a disordered region. Residues Met1–Gly27 lie on the Cytoplasmic side of the membrane. Residues Ala28 to Val48 form a helical membrane-spanning segment. Over Lys49–Ser73 the chain is Extracellular. Asn51 carries N-linked (GlcNAc...) asparagine glycosylation. The chain crosses the membrane as a helical span at residues Ala74 to Leu94. At Ala95–Lys108 the chain is on the cytoplasmic side. Residues Leu109–Ala129 form a helical membrane-spanning segment. Residues Ala130–Arg163 lie on the Extracellular side of the membrane. Residues Ala164–Ala184 traverse the membrane as a helical segment. Topologically, residues Gln185–Ile203 are cytoplasmic.

It belongs to the Casparian strip membrane proteins (CASP) family. Homodimer and heterodimers.

The protein localises to the cell membrane. The polypeptide is CASP-like protein 2U2 (Osmunda lancea (Fern)).